We begin with the raw amino-acid sequence, 86 residues long: Maxadilan (86 aa).

Positions 1–23 (MKQILLISLVVVLAVFAFNVAEG) are cleaved as a signal peptide. 2 cysteine pairs are disulfide-bonded: Cys-24/Cys-28 and Cys-37/Cys-74.

In terms of assembly, interacts with human ADCYAP1R1. Salivary gland (at protein level).

It is found in the secreted. Functionally, potent vasodilator. Activates mammalian ADCYAP1R1, a PAC1 receptor, and induces cAMP accumulation in host cells. Causes the development of erythema following superficial injection into the rabbit or human skin. Influences adaptive immune responses mediated by host dendritic cells. Reduces surface expression of CD80 on host dendritic cells stimulated with lipopolysaccharides (LPS) and induces concomitant increase in CD86 expression on a subpopulation of these cells. Redirects cytokine secretion by LPS-activated host dendritic cells toward type 2 responses: decreases secretion of TNF-alpha/TNF, IL-12p40/IL12B and IFN-gamma/IFNG, and increases secretion of IL6 and IL10. Reduces ability of host bone marrow-derived dendritic cells to stimulate proliferation of CD4(+) T-cells. Reprograms the effect of LPS-activated host dendritic cells on cytokine secretion profiles in host T-cells: decreases secretion of TNF-alpha/TNF and IFN-gamma/IFNG, increases secretion of IL6 and IL13, and increases secretion of pro-inflammatory cytokine IL-1beta/IL1B in mixed lymphocyte reaction (MLR) cultures. Reduces LPS-induced up-regulation of CCR7 in activated host dendritic cells. Inhibits IFN-gamma/IFNG and IL-12p40/IL12B production by human peripheral blood mononuclear cells. Increases IL6 and decreases TNF-alpha/TNF production by LPS-stimulated human monocytes. In terms of biological role, (Microbial infection) Probably plays a critical role in the enhancement of Leishmania infectivity in the host attributed to sand fly saliva. The polypeptide is Maxadilan (Lutzomyia longipalpis (Sand fly)).